A 171-amino-acid chain; its full sequence is uncharacterized protein (171 aa).

This is an uncharacterized protein from Haemophilus influenzae (strain ATCC 51907 / DSM 11121 / KW20 / Rd).